Consider the following 53-residue polypeptide: Zinc metalloproteinase-disintegrin-like alborhagin (53 aa).

The protein belongs to the venom metalloproteinase (M12B) family. P-III subfamily. P-IIIb sub-subfamily. In terms of assembly, monomer. Zn(2+) serves as cofactor. Post-translationally, contains numerous disulfide bonds. In terms of processing, glycosylated. As to expression, expressed by the venom gland.

It is found in the secreted. Its activity is regulated as follows. Alborhagin-induced platelet aggregation, but not shape change, is inhibited by EDTA, suggesting that the platelet activation (shape change) is independent of divalent cation or metalloproteinase activity. Its function is as follows. Induces platelet activation and glycoprotein VI (GP6)-dependent platelet aggregation. Induces ectodomain cleavage of GP6 by activating endogenous platelet metalloproteinases (probably ADAM10). Has fibrinogenolytic activity against the alpha chain of fibrinogen (FGA). Recognizes distinct binding sites as convulxin, since alborhagin has minimal effect on convulxin binding to GPVI-expressing cells. Functionally, disintegrin alborhagin-C: 42 kDa fragment of alborhagin autoproteolysed that does not show platelet activation. The sequence is that of Zinc metalloproteinase-disintegrin-like alborhagin from Trimeresurus albolabris (White-lipped pit viper).